A 212-amino-acid chain; its full sequence is Thymidylate kinase (212 aa).

11-18 (GPEGAGKT) lines the ATP pocket.

This sequence belongs to the thymidylate kinase family.

It catalyses the reaction dTMP + ATP = dTDP + ADP. Its function is as follows. Phosphorylation of dTMP to form dTDP in both de novo and salvage pathways of dTTP synthesis. The protein is Thymidylate kinase of Streptococcus pneumoniae (strain P1031).